The primary structure comprises 48 residues: Fimbrial assembly protein, serogroup A1 (48 aa).

This chain is Fimbrial assembly protein, serogroup A1 (fimB), found in Dichelobacter nodosus (Bacteroides nodosus).